The sequence spans 568 residues: Putative DEAD-box RNA helicase HEL64 (568 aa).

The disordered stretch occupies residues 1 to 34 (MEETYSPFTGRQGQYNQGYNGGGRRDSRGGMGER). The span at 23–34 (GRRDSRGGMGER) shows a compositional bias: basic and acidic residues. A Q motif motif is present at residues 102–130 (FDHLCGIVPPYLLKKLTAQNFTAPTPVQA). Residues 133-307 (WPVLLSGRDL…AEFQKQWIRI (175 aa)) enclose the Helicase ATP-binding domain. ATP is bound at residue 146–153 (AKTGSGKT). The DEAD box motif lies at 255–258 (DEAD). Residues 335-483 (ELRKLMQEHR…EIPDWMIEWN (149 aa)) enclose the Helicase C-terminal domain.

It belongs to the DEAD box helicase family. DDX5/DBP2 subfamily.

The protein localises to the nucleus. It catalyses the reaction ATP + H2O = ADP + phosphate + H(+). The chain is Putative DEAD-box RNA helicase HEL64 (HEL64) from Trypanosoma brucei brucei.